A 1130-amino-acid polypeptide reads, in one-letter code: Putative protein tag-278 (1130 aa).

Disordered stretches follow at residues 1 to 92, 104 to 129, and 974 to 1130; these read MSRS…DIDN, VARE…ELKR, and NELI…AWKF. 2 coiled-coil regions span residues 121–779 and 805–1061; these read AGRE…EEIK and EERE…ARAK. The segment covering 983–993 has biased composition (basic and acidic residues); sequence RQTDESTSEPH. Residues 999–1011 are compositionally biased toward polar residues; that stretch reads SITSHGVFQNFVS. Basic and acidic residues-rich tracts occupy residues 1013–1057 and 1068–1081; these read MKDK…EKSP and RLRD…KSDN. Low complexity predominate over residues 1082-1095; that stretch reads LESTPSSSSRNLLS. Basic and acidic residues predominate over residues 1116-1130; sequence TKKDSSSEKRPAWKF.

The chain is Putative protein tag-278 (tag-278) from Caenorhabditis elegans.